Here is a 622-residue protein sequence, read N- to C-terminus: Sodium-dependent serotonin transporter (622 aa).

The segment at 1 to 53 (MDRSGSSDFAGAAATTGRSNPAPWSDDKESPNNEDDSNEDDGDHTTPAKVTDP) is disordered. Over 1–82 (MDRSGSSDFA…TRETWGQKAE (82 aa)) the chain is Cytoplasmic. The span at 32 to 42 (NNEDDSNEDDG) shows a compositional bias: acidic residues. Helical transmembrane passes span 83–103 (FLLA…FPYI), 111–130 (AFLV…LFYM), and 155–175 (GVGY…NTII). Positions 89, 91, 92, and 96 each coordinate Na(+). The Extracellular segment spans residues 176 to 244 (GWAVYYLFAS…NGLDFMGPVK (69 aa)). Residues Cys-195 and Cys-204 are joined by a disulfide bond. N-linked (GlcNAc...) asparagine glycosylation is present at Asn-211. Helical transmembrane passes span 245-263 (PTLA…FSLW), 272-289 (VVWV…ILLV), 325-342 (IFFS…LSSY), 354-375 (LITS…FSVL), and 408-427 (MSGS…TLGL). Residues Ser-328, Asn-360, Leu-425, Asp-428, and Ser-429 each coordinate Na(+). Helical transmembrane passes span 455-473 (LFVL…PTMT), 489-509 (GLAI…FYGV), 530-549 (ICWT…FSIM), and 568-586 (VGWA…YIIY). Over 587 to 622 (KFFFASKGGCRQRLQESFQPEDNCGSVVPGQQGTSV) the chain is Cytoplasmic.

This sequence belongs to the sodium:neurotransmitter symporter (SNF) (TC 2.A.22) family. In terms of tissue distribution, expression is specific to cell bodies in the ventral ganglion of the embryonic and larval nervous system.

Its subcellular location is the cell membrane. Its function is as follows. Terminates the action of serotonin by its high affinity sodium-dependent reuptake into presynaptic terminals. This chain is Sodium-dependent serotonin transporter (SerT), found in Drosophila melanogaster (Fruit fly).